A 609-amino-acid chain; its full sequence is UvrABC system protein C (609 aa).

The GIY-YIG domain maps to 13 to 91 (HQPGVYRMFD…IKAFQPRYNV (79 aa)). One can recognise a UVR domain in the interval 201–236 (QQVLEHLIKKMEQASMQLNFEQAAYFRDQIQAIRAV).

Belongs to the UvrC family. As to quaternary structure, interacts with UvrB in an incision complex.

It is found in the cytoplasm. Functionally, the UvrABC repair system catalyzes the recognition and processing of DNA lesions. UvrC both incises the 5' and 3' sides of the lesion. The N-terminal half is responsible for the 3' incision and the C-terminal half is responsible for the 5' incision. The polypeptide is UvrABC system protein C (Histophilus somni (strain 2336) (Haemophilus somnus)).